A 2035-amino-acid polypeptide reads, in one-letter code: Proline-rich protein 12 (2035 aa).

Disordered regions lie at residues 210–280 (GGGV…ERAL), 292–311 (RPAS…LQHY), 329–584 (CSPL…GAPG), and 645–685 (QAPS…GTPY). The span at 223 to 240 (QTPPYRPGPPDPPPPPRH) shows a compositional bias: pro residues. Residues 249–261 (ASSSAATAAEPSS) are compositionally biased toward low complexity. The segment covering 296 to 305 (AQPPPPPPPA) has biased composition (pro residues). 2 positions are modified to phosphoserine: S330 and S338. Residues 338 to 364 (SPGAGEPSKGGPSGATAGAAGRATGPE) are compositionally biased toward low complexity. The span at 365-377 (TAGGGAAGGGGGY) shows a compositional bias: gly residues. Composition is skewed to low complexity over residues 408 to 429 (STAT…AGKA) and 437 to 455 (SQAY…QAYG). A compositionally biased stretch (pro residues) spans 476–487 (PPQPPSGPPPPG). Composition is skewed to polar residues over residues 490-501 (TCQSYSPDQLQG) and 520-534 (GLPT…STGH). Residues 540–555 (GHGGGWGPSSLGGGGE) are compositionally biased toward gly residues. The residue at position 648 (S648) is a Phosphoserine. Residues 670-681 (GLGGSGGAGGAP) show a composition bias toward gly residues. Position 735 is a phosphothreonine (T735). 4 disordered regions span residues 755 to 844 (AFLQ…PLQL), 851 to 870 (HGLE…SLEP), 879 to 920 (GALE…APRF), and 946 to 1061 (EMFG…CSTK). Residues 830–841 (PQPPPPPPPPMP) are compositionally biased toward pro residues. S859 bears the Phosphoserine mark. The span at 1031 to 1046 (SAPPPPPPPPPPPPVS) shows a compositional bias: pro residues. Phosphoserine occurs at positions 1070 and 1128. Disordered stretches follow at residues 1112–1244 (RRLP…DHNS), 1288–1355 (PLYQ…SPCK), 1367–1567 (TLPS…GEGI), and 1662–1839 (HRPP…PGRL). Over residues 1190 to 1199 (KPRGRGRGRG) the composition is skewed to basic residues. A compositionally biased stretch (basic and acidic residues) spans 1200 to 1214 (RKAEEMGGTRLEPLK). N6-acetyllysine is present on K1214. T1295 is modified (phosphothreonine). S1299 is subject to Phosphoserine. The span at 1314–1329 (QPPPPTVPTVPHPAPS) shows a compositional bias: pro residues. Phosphoserine occurs at positions 1372, 1373, and 1378. The segment covering 1449-1529 (PPTPPPAPTP…PPEEPPAPSP (81 aa)) has biased composition (pro residues). Residues 1535–1547 (PDARPLHLAKKQE) show a composition bias toward basic and acidic residues. T1555 is subject to Phosphothreonine. A Phosphoserine modification is found at S1562. The span at 1698–1709 (ETPEKMTSEKPP) shows a compositional bias: basic and acidic residues. T1699 carries the post-translational modification Phosphothreonine. A compositionally biased stretch (pro residues) spans 1710–1730 (EPAPEPAVPEPPAPEKPSPPR). Residues 1731 to 1768 (PVEKEKEKEKEKEKEKERVTRPLRSERATSGRQMRTDR) are compositionally biased toward basic and acidic residues. Positions 1769–1779 (SLATGQSTTSR) are enriched in polar residues. A compositionally biased stretch (low complexity) spans 1817–1828 (SSSDSESSPGAP). Position 1924 is a phosphoserine (S1924).

As to expression, expressed in brain.

Its subcellular location is the nucleus. It localises to the postsynaptic density. It is found in the synapse. The protein localises to the synaptosome. The sequence is that of Proline-rich protein 12 from Mus musculus (Mouse).